The sequence spans 465 residues: Phospholipase A1-II 5 (465 aa).

Residue Ser-233 is the Acyl-ester intermediate of the active site. Active-site charge relay system residues include Ser-233, Asp-297, and His-336.

The protein belongs to the AB hydrolase superfamily. Lipase family.

Its subcellular location is the cytoplasm. Acylhydrolase that catalyzes the hydrolysis of phospholipids at the sn-1 position. This is Phospholipase A1-II 5 from Oryza sativa subsp. indica (Rice).